Here is a 347-residue protein sequence, read N- to C-terminus: Farnesyl pyrophosphate synthase (347 aa).

Isopentenyl diphosphate-binding residues include K50, R53, and Q88. The Mg(2+) site is built by D95 and D99. A dimethylallyl diphosphate-binding site is contributed by R104. R105 contributes to the isopentenyl diphosphate binding site. Positions 192, 193, 232, 249, and 258 each coordinate dimethylallyl diphosphate.

The protein belongs to the FPP/GGPP synthase family. In terms of assembly, interacts with spo9. The cofactor is Mg(2+).

Its subcellular location is the cytoplasm. It is found in the nucleus. It carries out the reaction isopentenyl diphosphate + dimethylallyl diphosphate = (2E)-geranyl diphosphate + diphosphate. The catalysed reaction is isopentenyl diphosphate + (2E)-geranyl diphosphate = (2E,6E)-farnesyl diphosphate + diphosphate. It functions in the pathway isoprenoid biosynthesis; farnesyl diphosphate biosynthesis; farnesyl diphosphate from geranyl diphosphate and isopentenyl diphosphate: step 1/1. The protein operates within isoprenoid biosynthesis; geranyl diphosphate biosynthesis; geranyl diphosphate from dimethylallyl diphosphate and isopentenyl diphosphate: step 1/1. Functionally, farnesyl pyrophosphate synthase; part of the second module of ergosterol biosynthesis pathway that includes the middle steps of the pathway. Fps1 catalyzes the sequential condensation of isopentenyl pyrophosphate with dimethylallyl pyrophosphate, and then with the resultant geranylpyrophosphate to the ultimate product farnesyl pyrophosphate. The second module is carried out in the vacuole and involves the formation of farnesyl diphosphate, which is also an important intermediate in the biosynthesis of ubiquinone, dolichol, heme and prenylated proteins. Activity by the mevalonate kinase erg12 first converts mevalonate into 5-phosphomevalonate. 5-phosphomevalonate is then further converted to 5-diphosphomevalonate by the phosphomevalonate kinase erg8. The diphosphomevalonate decarboxylase mvd1 then produces isopentenyl diphosphate. The isopentenyl-diphosphate delta-isomerase idi1 then catalyzes the 1,3-allylic rearrangement of the homoallylic substrate isopentenyl (IPP) to its highly electrophilic allylic isomer, dimethylallyl diphosphate (DMAPP). Finally the farnesyl diphosphate synthase fps1 catalyzes the sequential condensation of isopentenyl pyrophosphate with dimethylallyl pyrophosphate, and then with the resultant geranylpyrophosphate to the ultimate product farnesyl pyrophosphate. This chain is Farnesyl pyrophosphate synthase, found in Schizosaccharomyces pombe (strain 972 / ATCC 24843) (Fission yeast).